The sequence spans 116 residues: Large ribosomal subunit protein uL18 (116 aa).

Belongs to the universal ribosomal protein uL18 family. As to quaternary structure, part of the 50S ribosomal subunit; part of the 5S rRNA/L5/L18/L25 subcomplex. Contacts the 5S and 23S rRNAs.

Functionally, this is one of the proteins that bind and probably mediate the attachment of the 5S RNA into the large ribosomal subunit, where it forms part of the central protuberance. The polypeptide is Large ribosomal subunit protein uL18 (Cellvibrio japonicus (strain Ueda107) (Pseudomonas fluorescens subsp. cellulosa)).